We begin with the raw amino-acid sequence, 510 residues long: Probable cytochrome P450 517A2 (510 aa).

Residues 1–21 (MRILIIIILIIIVFLVKDTIK) form a helical membrane-spanning segment. C450 is a heme binding site.

This sequence belongs to the cytochrome P450 family. It depends on heme as a cofactor.

The protein resides in the membrane. The polypeptide is Probable cytochrome P450 517A2 (cyp517A2) (Dictyostelium discoideum (Social amoeba)).